Consider the following 922-residue polypeptide: Dual serine/threonine and tyrosine protein kinase (922 aa).

Positions 645-899 (PKLGRELGRG…PLLGIVEPSL (255 aa)) constitute a Protein kinase domain. ATP is bound by residues 651–659 (LGRGQYGVV) and K674. Catalysis depends on D770, which acts as the Proton acceptor.

Belongs to the protein kinase superfamily. Ser/Thr protein kinase family.

The protein resides in the cytoplasm. Its subcellular location is the cell membrane. It localises to the apical cell membrane. It is found in the basolateral cell membrane. The protein localises to the cell junction. It carries out the reaction L-seryl-[protein] + ATP = O-phospho-L-seryl-[protein] + ADP + H(+). The enzyme catalyses L-threonyl-[protein] + ATP = O-phospho-L-threonyl-[protein] + ADP + H(+). It catalyses the reaction L-tyrosyl-[protein] + ATP = O-phospho-L-tyrosyl-[protein] + ADP + H(+). In terms of biological role, may act as a positive regulator of ERK phosphorylation downstream of fibroblast growth factor-receptor activation. May induce both caspase-dependent apoptosis and caspase-independent cell death. May play a role in the embryonic development. This Tetraodon nigroviridis (Spotted green pufferfish) protein is Dual serine/threonine and tyrosine protein kinase.